Consider the following 275-residue polypeptide: Rhamnulose-1-phosphate aldolase (275 aa).

The active site involves glutamate 117. Positions 141, 143, and 212 each coordinate Zn(2+).

The protein belongs to the aldolase class II family. RhaD subfamily. Homotetramer. Zn(2+) serves as cofactor.

It localises to the cytoplasm. It carries out the reaction L-rhamnulose 1-phosphate = (S)-lactaldehyde + dihydroxyacetone phosphate. The protein operates within carbohydrate degradation; L-rhamnose degradation; glycerone phosphate from L-rhamnose: step 3/3. In terms of biological role, catalyzes the reversible cleavage of L-rhamnulose-1-phosphate to dihydroxyacetone phosphate (DHAP) and L-lactaldehyde. In Salmonella heidelberg (strain SL476), this protein is Rhamnulose-1-phosphate aldolase.